Consider the following 202-residue polypeptide: MNIIRKIVKSCKDEEEHKPNPVSAPPDDDDLWLPPPEYVPLAEITGKKNMRNFCINGEVKVCSPNGYSFRILRHILKSFEGVYSGNRRMIGLVKVVIGLAQSGAPVPEGMNWVYKIRRTLVFQWAESSGPLDGEELEYSQEITWDDDSEFVGLQIRVSARQCHIQGRLWCINMNSRACQLWADMSLKTQQSNEDKNTSLLLE.

Residues 35–38 carry the PPXY motif motif; the sequence is PPEY. Residues 115-151 form an essential for glycoprotein binding region; it reads KIRRTLVFQWAESSGPLDGEELEYSQEITWDDDSEFV.

It belongs to the lyssavirus matrix protein family. As to quaternary structure, homomultimer. Interacts with nucleoprotein and with the cytoplasmic domain of glycoprotein.

It localises to the virion membrane. The protein resides in the host endomembrane system. Plays a major role in assembly and budding of virion. Completely covers the ribonucleoprotein coil and keep it in condensed bullet-shaped form. Inhibits viral transcription and stimulates replication. Plays a major role in early induction of TRAIL-mediated apoptosis in infected neurons. This chain is Matrix protein (M), found in Irkut virus (IRKV).